The sequence spans 339 residues: Nucleoid-associated protein Asuc_0779 (339 aa).

It belongs to the YejK family.

It is found in the cytoplasm. The protein localises to the nucleoid. The sequence is that of Nucleoid-associated protein Asuc_0779 from Actinobacillus succinogenes (strain ATCC 55618 / DSM 22257 / CCUG 43843 / 130Z).